Here is a 35-residue protein sequence, read N- to C-terminus: Kappa-theraphotoxin-Tb1a (35 aa).

3 disulfide bridges follow: Cys-3/Cys-18, Cys-10/Cys-23, and Cys-17/Cys-30.

It belongs to the neurotoxin 10 (Hwtx-1) family. 59 (Tltx) subfamily. Monomer. As to expression, expressed by the venom gland.

Its subcellular location is the secreted. Functionally, blocks Kv4.2/KCND2 voltage-gated potassium channels (IC(50) is 193.0 nM) by shifting the voltage-dependence of channel activation to more depolarized potentials. The toxin is thought to bind to the S3-S4 linker region of the voltage sensor domain. The sequence is that of Kappa-theraphotoxin-Tb1a from Theraphosa blondi (Goliath birdeating spider).